The sequence spans 328 residues: Renalase (328 aa).

FAD-binding positions include A13, 32–33, R40, and 56–57; these read DK and QY. Residues 57–61 and 96–98 contribute to the substrate site; these read YFTAR and SPD. An FAD-binding site is contributed by I128. T185 is a binding site for substrate. D302 is a binding site for FAD. Residue R308 participates in substrate binding. FAD is bound at residue V309.

Belongs to the bacterial renalase family. FAD serves as cofactor.

It catalyses the reaction 1,2-dihydro-beta-NAD + O2 + H(+) = H2O2 + NAD(+). The enzyme catalyses 1,2-dihydro-beta-NADP + O2 + H(+) = H2O2 + NADP(+). It carries out the reaction 1,6-dihydro-beta-NADP + O2 + H(+) = H2O2 + NADP(+). The catalysed reaction is 1,6-dihydro-beta-NAD + O2 + H(+) = H2O2 + NAD(+). Functionally, catalyzes the oxidation of the 1,2-dihydro- and 1,6-dihydro- isomeric forms of beta-NAD(P) back to beta-NAD(P)+. Has a preference for 1,2-dihydro-beta-NAD as substrate. May serve to protect primary metabolism dehydrogenases from inhibition by the 1,2-dihydro- and 1,6-dihydro-beta-NAD(P) isomers. In Pseudomonas syringae pv. tomato (strain ATCC BAA-871 / DC3000), this protein is Renalase.